A 238-amino-acid chain; its full sequence is UDP-2,3-diacylglucosamine hydrolase (238 aa).

The Mn(2+) site is built by aspartate 8, histidine 10, aspartate 41, asparagine 78, and histidine 113. Residue 78-79 (NR) coordinates substrate. Positions 121, 159, 163, 166, and 194 each coordinate substrate. Mn(2+) is bound by residues histidine 194 and histidine 196.

Belongs to the LpxH family. Requires Mn(2+) as cofactor.

Its subcellular location is the cell inner membrane. It catalyses the reaction UDP-2-N,3-O-bis[(3R)-3-hydroxytetradecanoyl]-alpha-D-glucosamine + H2O = 2-N,3-O-bis[(3R)-3-hydroxytetradecanoyl]-alpha-D-glucosaminyl 1-phosphate + UMP + 2 H(+). It participates in glycolipid biosynthesis; lipid IV(A) biosynthesis; lipid IV(A) from (3R)-3-hydroxytetradecanoyl-[acyl-carrier-protein] and UDP-N-acetyl-alpha-D-glucosamine: step 4/6. Hydrolyzes the pyrophosphate bond of UDP-2,3-diacylglucosamine to yield 2,3-diacylglucosamine 1-phosphate (lipid X) and UMP by catalyzing the attack of water at the alpha-P atom. Involved in the biosynthesis of lipid A, a phosphorylated glycolipid that anchors the lipopolysaccharide to the outer membrane of the cell. This chain is UDP-2,3-diacylglucosamine hydrolase, found in Shewanella halifaxensis (strain HAW-EB4).